The chain runs to 738 residues: Wall-associated receptor kinase 4 (738 aa).

Positions 1–22 are cleaved as a signal peptide; that stretch reads MKVQRLFLVAIFCLSYMQLVKG. The Extracellular portion of the chain corresponds to 23-335; that stretch reads QTLPRCPEKC…PKGNPEYVEW (313 aa). 7 N-linked (GlcNAc...) asparagine glycosylation sites follow: N34, N56, N109, N115, N132, N182, and N208. The 47-residue stretch at 232–278 folds into the EGF-like 1 domain; sequence RGETCGQVGEKKCGVNGICSNSASGIGYTCKCKGGFQGNPYLQNGCQ. Intrachain disulfides connect C236/C250, C244/C261, C263/C277, C283/C300, C294/C309, and C311/C324. Positions 279–325 constitute an EGF-like 2; calcium-binding domain; it reads DINECTTANPIHKHNCSGDSTCENKLGHFRCNCRSRYELNTTTNTCK. N293 is a glycosylation site (N-linked (GlcNAc...) asparagine). N318 carries an N-linked (GlcNAc...) asparagine glycan. Residues 336-356 form a helical membrane-spanning segment; it reads TTIVLGTTIGFLVILLAISCI. Topologically, residues 357-738 are cytoplasmic; that stretch reads EHKMKNTKDT…VAILDIEAGR (382 aa). Position 399 is a phosphothreonine (T399). Residues 410 to 693 enclose the Protein kinase domain; sequence YDENRILGQG…RVTKTKHKWS (284 aa). ATP is bound by residues 416-424 and K438; that span reads LGQGGQGTV. Y483 is subject to Phosphotyrosine. The Proton acceptor role is filled by D535. 2 positions are modified to phosphothreonine: T569 and T574. Y582 is subject to Phosphotyrosine.

Belongs to the protein kinase superfamily. Ser/Thr protein kinase family. In terms of tissue distribution, strictly expressed in siliques.

Its subcellular location is the membrane. It catalyses the reaction L-seryl-[protein] + ATP = O-phospho-L-seryl-[protein] + ADP + H(+). The enzyme catalyses L-threonyl-[protein] + ATP = O-phospho-L-threonyl-[protein] + ADP + H(+). Functionally, serine/threonine-protein kinase that may function as a signaling receptor of extracellular matrix component. Binding to pectin may have significance in the control of cell expansion, morphogenesis and development. The polypeptide is Wall-associated receptor kinase 4 (WAK4) (Arabidopsis thaliana (Mouse-ear cress)).